We begin with the raw amino-acid sequence, 206 residues long: LexA repressor (206 aa).

The H-T-H motif DNA-binding region spans 28 to 48 (RAEIATRLGFKSANAAEEHLK). Active-site for autocatalytic cleavage activity residues include serine 123 and lysine 160.

Belongs to the peptidase S24 family. Homodimer.

It carries out the reaction Hydrolysis of Ala-|-Gly bond in repressor LexA.. In terms of biological role, represses a number of genes involved in the response to DNA damage (SOS response), including recA and lexA. In the presence of single-stranded DNA, RecA interacts with LexA causing an autocatalytic cleavage which disrupts the DNA-binding part of LexA, leading to derepression of the SOS regulon and eventually DNA repair. In Shewanella sp. (strain MR-4), this protein is LexA repressor.